Reading from the N-terminus, the 683-residue chain is uncharacterized protein (683 aa).

14 helical membrane passes run 12–32, 41–61, 84–104, 110–130, 162–182, 194–214, 221–241, 377–397, 413–433, 495–515, 548–568, 573–593, 603–623, and 645–665; these read LLLY…MMGL, LWLG…IGLI, MAIA…GILF, GLAY…LLAP, IAVL…IQGV, FAVG…LGGM, QVAQ…MIAW, LNFV…PHIL, VAWA…LAAL, IAGL…AAAL, VTTA…VTSL, ILFL…PVLV, AAGA…YIIV, and IASG…VSLL.

Belongs to the sodium:solute symporter (SSF) (TC 2.A.21) family.

It is found in the cell membrane. This is an uncharacterized protein from Cupriavidus necator (strain ATCC 17699 / DSM 428 / KCTC 22496 / NCIMB 10442 / H16 / Stanier 337) (Ralstonia eutropha).